Reading from the N-terminus, the 161-residue chain is Bacterioferritin (161 aa).

Residues 1 to 145 form the Ferritin-like diiron domain; it reads MKGEPKVIER…TQLDLLAKIG (145 aa). 2 residues coordinate Fe cation: Glu-18 and Glu-51. Position 52 (Met-52) interacts with heme b. His-54, Glu-94, Glu-127, and His-130 together coordinate Fe cation.

This sequence belongs to the bacterioferritin family. Homooligomer of 24 subunits, arranged as 12 dimers, that are packed together to form an approximately spherical molecule with a central cavity, in which large amounts of iron can be deposited. Heme b is required as a cofactor.

The enzyme catalyses 4 Fe(2+) + O2 + 4 H(+) = 4 Fe(3+) + 2 H2O. It catalyses the reaction Fe(2+)(in) = Fe(2+)(out). In terms of biological role, iron-storage protein, whose ferroxidase center binds Fe(2+), oxidizes it using dioxygen to Fe(3+), and participates in the subsequent Fe(3+) oxide mineral core formation within the central cavity of the BFR protein shell. This Brucella melitensis biotype 1 (strain ATCC 23456 / CCUG 17765 / NCTC 10094 / 16M) protein is Bacterioferritin (bfr).